An 89-amino-acid polypeptide reads, in one-letter code: Small ribosomal subunit protein uS15 (89 aa).

This sequence belongs to the universal ribosomal protein uS15 family. In terms of assembly, part of the 30S ribosomal subunit. Forms a bridge to the 50S subunit in the 70S ribosome, contacting the 23S rRNA.

One of the primary rRNA binding proteins, it binds directly to 16S rRNA where it helps nucleate assembly of the platform of the 30S subunit by binding and bridging several RNA helices of the 16S rRNA. Its function is as follows. Forms an intersubunit bridge (bridge B4) with the 23S rRNA of the 50S subunit in the ribosome. The protein is Small ribosomal subunit protein uS15 of Pseudoalteromonas atlantica (strain T6c / ATCC BAA-1087).